We begin with the raw amino-acid sequence, 591 residues long: Aspartate--tRNA(Asp/Asn) ligase (591 aa).

Glu-174 is an L-aspartate binding site. An aspartate region spans residues 198–201 (QLFK). Arg-220 contacts L-aspartate. ATP contacts are provided by residues 220-222 (RDE) and Gln-229. His-450 contributes to the L-aspartate binding site. Glu-483 serves as a coordination point for ATP. Residue Arg-490 participates in L-aspartate binding. 535–538 (GLDR) is a binding site for ATP.

It belongs to the class-II aminoacyl-tRNA synthetase family. Type 1 subfamily. Homodimer.

The protein localises to the cytoplasm. The enzyme catalyses tRNA(Asx) + L-aspartate + ATP = L-aspartyl-tRNA(Asx) + AMP + diphosphate. Aspartyl-tRNA synthetase with relaxed tRNA specificity since it is able to aspartylate not only its cognate tRNA(Asp) but also tRNA(Asn). Reaction proceeds in two steps: L-aspartate is first activated by ATP to form Asp-AMP and then transferred to the acceptor end of tRNA(Asp/Asn). The protein is Aspartate--tRNA(Asp/Asn) ligase of Pseudomonas syringae pv. tomato (strain ATCC BAA-871 / DC3000).